We begin with the raw amino-acid sequence, 89 residues long: ATP synthase subunit c (89 aa).

2 consecutive transmembrane segments (helical) span residues 3 to 23 (IILG…AIGA) and 53 to 73 (FILA…ALMF).

This sequence belongs to the ATPase C chain family. As to quaternary structure, F-type ATPases have 2 components, F(1) - the catalytic core - and F(0) - the membrane proton channel. F(1) has five subunits: alpha(3), beta(3), gamma(1), delta(1), epsilon(1). F(0) has three main subunits: a(1), b(2) and c(10-14). The alpha and beta chains form an alternating ring which encloses part of the gamma chain. F(1) is attached to F(0) by a central stalk formed by the gamma and epsilon chains, while a peripheral stalk is formed by the delta and b chains.

It is found in the cell inner membrane. F(1)F(0) ATP synthase produces ATP from ADP in the presence of a proton or sodium gradient. F-type ATPases consist of two structural domains, F(1) containing the extramembraneous catalytic core and F(0) containing the membrane proton channel, linked together by a central stalk and a peripheral stalk. During catalysis, ATP synthesis in the catalytic domain of F(1) is coupled via a rotary mechanism of the central stalk subunits to proton translocation. Functionally, key component of the F(0) channel; it plays a direct role in translocation across the membrane. A homomeric c-ring of between 10-14 subunits forms the central stalk rotor element with the F(1) delta and epsilon subunits. The sequence is that of ATP synthase subunit c from Verminephrobacter eiseniae (strain EF01-2).